Consider the following 73-residue polypeptide: MAKKDGVIEIEGVVTEALPNAMFRVELTNKHVVLAHISGKMRQHYIRILPEDRVVVELSPYDLTRGRIVYRYK.

Positions 1-73 constitute an S1-like domain; sequence MAKKDGVIEI…TRGRIVYRYK (73 aa).

This sequence belongs to the IF-1 family. As to quaternary structure, component of the 30S ribosomal translation pre-initiation complex which assembles on the 30S ribosome in the order IF-2 and IF-3, IF-1 and N-formylmethionyl-tRNA(fMet); mRNA recruitment can occur at any time during PIC assembly.

The protein localises to the cytoplasm. One of the essential components for the initiation of protein synthesis. Stabilizes the binding of IF-2 and IF-3 on the 30S subunit to which N-formylmethionyl-tRNA(fMet) subsequently binds. Helps modulate mRNA selection, yielding the 30S pre-initiation complex (PIC). Upon addition of the 50S ribosomal subunit IF-1, IF-2 and IF-3 are released leaving the mature 70S translation initiation complex. This chain is Translation initiation factor IF-1, found in Paenarthrobacter aurescens (strain TC1).